Consider the following 355-residue polypeptide: Probable butyrate kinase (355 aa).

The protein belongs to the acetokinase family.

The protein resides in the cytoplasm. The catalysed reaction is butanoate + ATP = butanoyl phosphate + ADP. In Clostridium botulinum (strain Eklund 17B / Type B), this protein is Probable butyrate kinase.